The sequence spans 347 residues: Olfactory receptor 6J1 (347 aa).

Topologically, residues 1 to 24 (MGNWTAAVTEFVLLGFSLSREVEL) are extracellular. N-linked (GlcNAc...) asparagine glycosylation occurs at Asn-3. A helical transmembrane segment spans residues 25–45 (LLLVLLLPTFLLTLLGNLLII). The Cytoplasmic segment spans residues 46–53 (STVLSCSR). The helical transmembrane segment at 54–74 (LHTPMYFFLCNLSILDILFTS) threads the bilayer. Over 75 to 98 (VISPKVLANLGSRDKTISFAGCIT) the chain is Extracellular. A disulfide bridge connects residues Cys-96 and Cys-188. A helical membrane pass occupies residues 99–119 (QCYFYFFLGTVEFLLLTVMSY). Over 120–138 (DRYATICCPLRYTTIMRPS) the chain is Cytoplasmic. Residues 139 to 159 (VCIGTVVFSWVGGFLSVLFPT) traverse the membrane as a helical segment. The Extracellular portion of the chain corresponds to 160-196 (ILISQLPFCGSNIINHFFCDSGPLLALACADTTAIEL). Residues 197-216 (MDFMLSSMVILCCIVLVAYS) form a helical membrane-spanning segment. The Cytoplasmic portion of the chain corresponds to 217-236 (YTYIILTIVRIPSASGRKKA). A helical membrane pass occupies residues 237-257 (FNTCASHLTIVIISSGITVFI). At 258–270 (YVTPSQKEYLEIN) the chain is on the extracellular side. Residues 271 to 291 (KIPLVLSSVVTPFLNPFIYTL) traverse the membrane as a helical segment. The Cytoplasmic segment spans residues 292–347 (RNDTVQGVLRDVWVRVRGVFEKRMRAVLRSRLSSNKDHQGRACSSPPCVYSVKLQC).

The protein belongs to the G-protein coupled receptor 1 family.

It is found in the cell membrane. Its function is as follows. Odorant receptor. The chain is Olfactory receptor 6J1 (OR6J1) from Homo sapiens (Human).